The sequence spans 139 residues: Large ribosomal subunit protein bL17 (139 aa).

It belongs to the bacterial ribosomal protein bL17 family. Part of the 50S ribosomal subunit. Contacts protein L32.

The chain is Large ribosomal subunit protein bL17 from Myxococcus xanthus (strain DK1622).